A 433-amino-acid polypeptide reads, in one-letter code: Trigger factor (433 aa).

Residues 163–248 (GDTVNIDFSG…VNEIKFKEVP (86 aa)) form the PPIase FKBP-type domain.

Belongs to the FKBP-type PPIase family. Tig subfamily.

The protein resides in the cytoplasm. It carries out the reaction [protein]-peptidylproline (omega=180) = [protein]-peptidylproline (omega=0). Functionally, involved in protein export. Acts as a chaperone by maintaining the newly synthesized protein in an open conformation. Functions as a peptidyl-prolyl cis-trans isomerase. The chain is Trigger factor from Staphylococcus aureus (strain bovine RF122 / ET3-1).